We begin with the raw amino-acid sequence, 464 residues long: Rhodopsin (464 aa).

Residues 1-33 are Extracellular-facing; that stretch reads MGRDIPDNETWWYNPTMEVHPHWKQFNQVPDAV. A glycan (N-linked (GlcNAc...) asparagine) is linked at Asn8. A helical transmembrane segment spans residues 34–58; that stretch reads YYSLGIFIGICGIIGCTGNGIVIYL. Residues 59–70 are Cytoplasmic-facing; it reads FTKTKSLQTPAN. The helical transmembrane segment at 71–97 threads the bilayer; the sequence is MFIINLAFSDFTFSLVNGFPLMTISCF. Over 98-109 the chain is Extracellular; sequence IKKWVFGMAACK. A disulfide bridge connects residues Cys108 and Cys186. A helical membrane pass occupies residues 110 to 131; sequence VYGFIGGIFGLMSIMTMSMISI. A 'Ionic lock' involved in activated form stabilization motif is present at residues 132–134; it reads DRY. The Cytoplasmic segment spans residues 132–151; the sequence is DRYNVIGRPMAASKKMSHRR. The chain crosses the membrane as a helical span at residues 152-172; that stretch reads AFLMIIFVWMWSTLWSIGPIF. At 173–199 the chain is on the extracellular side; that stretch reads GWGAYVLEGVLCNCSFDYITRDSATRS. A helical membrane pass occupies residues 200 to 224; sequence NIVCMYIFAFCFPILIIFFCYFNIV. At 225–261 the chain is on the cytoplasmic side; it reads MAVSNHEKEMAAMAKRLNAKELRKAQAGASAEMKLAK. The chain crosses the membrane as a helical span at residues 262-283; it reads ISIVIVTQFLLSWSPYAVVALL. Topologically, residues 284 to 293 are extracellular; that stretch reads AQFGPIEWVT. The helical transmembrane segment at 294–315 threads the bilayer; it reads PYAAQLPVMFAKASAIHNPLIY. N6-(retinylidene)lysine is present on Lys305. Over 316 to 464 the chain is Cytoplasmic; the sequence is SVSHPKFREA…QGVDNQAYQA (149 aa). 2 S-palmitoyl cysteine lipidation sites follow: Cys336 and Cys337. The tract at residues 344 to 464 is disordered; that stretch reads VEDDKDAETE…QGVDNQAYQA (121 aa). The span at 367 to 401 shows a compositional bias: low complexity; the sequence is AAQMKEMMAMMQKMQQQQAAYPPQGAYPPQGGYPP. 2 stretches are compositionally biased toward pro residues: residues 416 to 425 and 434 to 452; these read QGYPPPPQGY and QGYP…PQAA.

Belongs to the G-protein coupled receptor 1 family. Opsin subfamily. Post-translationally, contains one covalently linked retinal chromophore. Upon light absorption, the covalently bound 11-cis-retinal is converted to all-trans-retinal. After hydrolysis of the Schiff base and release of the covalently bound all-trans-retinal, active rhodopsin is regenerated by binding of a fresh molecule of 11-cis-retinal.

The protein resides in the cell projection. The protein localises to the rhabdomere membrane. In terms of biological role, photoreceptor required for image-forming vision at low light intensity. Light-induced isomerization of 11-cis to all-trans retinal triggers a conformational change that activates signaling via G-proteins. Signaling mediates the activation of phospholipase C. Subsequent receptor phosphorylation mediates displacement of the bound G-protein alpha subunit by arrestin and terminates signaling. This Sepia officinalis (Common cuttlefish) protein is Rhodopsin (RHO).